A 353-amino-acid polypeptide reads, in one-letter code: L-tryptophan dehydrogenase (353 aa).

Arginine 44 contributes to the NAD(+) binding site. Catalysis depends on lysine 80, which acts as the Proton donor/acceptor. Residues aspartate 114, threonine 146, glycine 176–glycine 181, lysine 204, and alanine 255–asparagine 257 each bind NAD(+).

It belongs to the Glu/Leu/Phe/Val dehydrogenases family. As to quaternary structure, homodimer.

The catalysed reaction is L-tryptophan + NAD(+) + H2O = indole-3-pyruvate + NH4(+) + NADH + H(+). Highly susceptible to inhibition by indole-3-pyruvate. Activity is not affected by the presence of metal ions, EDTA, KCl or DMSO. In terms of biological role, catalyzes the reversible oxidative deamination of L-tryptophan to indole-3-pyruvate in the presence of NAD(+). Shows weak activity with L-phenylalanine, but cannot use other L-amino acids and D-Trp. Cannot use NADP(+) for oxidative deamination of L-Trp, and shows only weak activity with NADPH for reductive amination of indole-3-pyruvate. Involved in the biosynthesis of scytonemin, a cyanobacterial radiation-absorbing pigment. The polypeptide is L-tryptophan dehydrogenase (Nostoc punctiforme).